A 557-amino-acid polypeptide reads, in one-letter code: Probable protein kinase UbiB (557 aa).

Residues 121 to 509 (SFDTVPLASA…RKLQTRVVTA (389 aa)) enclose the Protein kinase domain. Residues 127–135 (LASASIAQV) and Lys-154 each bind ATP. The active-site Proton acceptor is Asp-289. Helical transmembrane passes span 506-526 (VVTA…YGLH) and 535-555 (VPVW…VAWL).

Belongs to the ABC1 family. UbiB subfamily.

The protein localises to the cell inner membrane. Its pathway is cofactor biosynthesis; ubiquinone biosynthesis [regulation]. Is probably a protein kinase regulator of UbiI activity which is involved in aerobic coenzyme Q (ubiquinone) biosynthesis. The polypeptide is Probable protein kinase UbiB (Xanthomonas axonopodis pv. citri (strain 306)).